Here is a 297-residue protein sequence, read N- to C-terminus: Taste receptor type 2 member 4 (297 aa).

The Extracellular portion of the chain corresponds to 1 to 11; the sequence is MLWELYVFVFA. A helical transmembrane segment spans residues 12 to 32; it reads ASVFLNFVGIIANLFIIVIII. The Cytoplasmic portion of the chain corresponds to 33–46; it reads KTWVNSRRIASPDR. A helical membrane pass occupies residues 47–67; the sequence is ILFSLAITRFLTLGLFLLNSV. The Extracellular segment spans residues 68–80; sequence YIATNTGRSVYFS. Residues 81 to 101 traverse the membrane as a helical segment; it reads TFFLLCWKFLDANSLWLVTIL. The Cytoplasmic portion of the chain corresponds to 102–128; it reads NSLYCVKITNFQHPVFLLLKRTISMKT. The chain crosses the membrane as a helical span at residues 129–149; sequence TSLLLACLLISALTTLLYYML. Over 150-171 the chain is Extracellular; that stretch reads SQISRFPEHIIGRNDTSFDLSD. N-linked (GlcNAc...) asparagine glycosylation occurs at asparagine 163. A helical membrane pass occupies residues 172–192; the sequence is GILTLVASLVLNSLLQFMLNV. Residues 193-229 lie on the Cytoplasmic side of the membrane; sequence TFASLLIHSLRRHIQKMQRNRTSFWNPQTEAHMGAMR. Residues 230–250 form a helical membrane-spanning segment; it reads LMICFLVLYIPYSIATLLYLP. The Extracellular portion of the chain corresponds to 251 to 260; that stretch reads SYMRKNLRAQ. Residues 261-281 traverse the membrane as a helical segment; it reads AICMIITAAYPPGHSVLLIIT. At 282-297 the chain is on the cytoplasmic side; the sequence is HHKLKAKAKKIFCFYK.

This sequence belongs to the G-protein coupled receptor T2R family. As to expression, expressed in subsets of taste receptor cells of the tongue and palate epithelium and exclusively in gustducin-positive cells. Expressed in 15% taste bud cells in circumvallate and foliate papillae but only in 2% in fungiform papillae.

It localises to the membrane. The protein localises to the cell projection. The protein resides in the cilium membrane. Its function is as follows. Gustducin-coupled receptor for denatonium and N(6)-propyl-2-thiouracil implicated in the perception of bitter compounds in the oral cavity and the gastrointestinal tract. Signals through PLCB2 and the calcium-regulated cation channel TRPM5. In airway epithelial cells, binding of denatonium increases the intracellular calcium ion concentration and stimulates ciliary beat frequency. This chain is Taste receptor type 2 member 4 (Tas2r4), found in Mus musculus (Mouse).